A 35-amino-acid polypeptide reads, in one-letter code: Photosystem I reaction center subunit Z (35 aa).

A helical membrane pass occupies residues 10-30 (LVIITTLVVPFMAAAALLFII).

The G.violaceus PSI reaction center is composed of one copy each of PsaA,B,C,D,E,F,L,M and Z, and forms trimeric complexes.

The protein resides in the cell inner membrane. In Gloeobacter violaceus (strain ATCC 29082 / PCC 7421), this protein is Photosystem I reaction center subunit Z (psaZ).